Reading from the N-terminus, the 314-residue chain is Basic leucine zipper 63 (314 aa).

Ser-29 bears the Phosphoserine; by KIN10 mark. Residues Lys-94–Ser-177 form a disordered region. A compositionally biased stretch (polar residues) spans Gln-96–Glu-133. Residues Asn-151–Leu-214 form the bZIP domain. Residues Lys-153 to Lys-172 are basic motif. Positions Val-155 to Arg-162 match the Nuclear localization signal 1 motif. The interval Leu-179–Leu-193 is leucine-zipper. A disordered region spans residues Ser-253–Ile-274. Ser-294 and Ser-300 each carry phosphoserine; by KIN10. The Nuclear localization signal 2 motif lies at Met-295–Glu-302.

This sequence belongs to the bZIP family. Homodimer. Forms a heterodimer with LSD1, BZIP1, BZIP2, BZIP9, BZIP10, BZIP11, BZIP25, BZIP44 and BZIP53. Interacts with KIN10 and SNF4. Component of a ternary complex composed of BZIP2-BZIP63 heterodimer and KIN10. Post-translationally, phosphorylated. The phosphorylation at Ser-29, Ser-294 and Ser-300 by KIN10 strongly enhances its ability to form homo- as well as heterodimers and are then essential for its transcriptional activity. Expressed in roots, shoots, young leaves, pollen, and flowers.

The protein resides in the nucleus. With respect to regulation, up-regulated by KIN10 under a phosphorylation-dependent manner. Transcription factor involved in controlling responses to starvation. BZIP2-BZIP63-KIN10 complex binds to the ETFQO promoter to up-regulate its transcription. In Arabidopsis thaliana (Mouse-ear cress), this protein is Basic leucine zipper 63 (BZIP63).